A 114-amino-acid polypeptide reads, in one-letter code: UPF0212 protein UNCMA_00570 (114 aa).

Belongs to the UPF0212 family.

The protein is UPF0212 protein UNCMA_00570 of Methanocella arvoryzae (strain DSM 22066 / NBRC 105507 / MRE50).